Consider the following 344-residue polypeptide: Heat-inducible transcription repressor HrcA (344 aa).

This sequence belongs to the HrcA family.

Negative regulator of class I heat shock genes (grpE-dnaK-dnaJ and groELS operons). Prevents heat-shock induction of these operons. This is Heat-inducible transcription repressor HrcA from Streptococcus pneumoniae (strain ATCC 700669 / Spain 23F-1).